A 134-amino-acid chain; its full sequence is Large ribosomal subunit protein uL14 (134 aa).

Belongs to the universal ribosomal protein uL14 family. As to quaternary structure, in the 70S ribosome, L14 and L19 interact and together make contacts with the 16S rRNA in bridges B5 and B8. Part of the 50S ribosomal subunit. Forms a cluster with proteins L3 and L19.

Forms part of two intersubunit bridges in the 70S ribosome. Binds to 23S rRNA. In Deinococcus radiodurans (strain ATCC 13939 / DSM 20539 / JCM 16871 / CCUG 27074 / LMG 4051 / NBRC 15346 / NCIMB 9279 / VKM B-1422 / R1), this protein is Large ribosomal subunit protein uL14.